Reading from the N-terminus, the 259-residue chain is Haloacid dehalogenase-like hydrolase domain-containing protein 2 (259 aa).

D13 and S15 together coordinate Mg(2+). Substrate-binding positions include 13 to 15 (DLS) and 46 to 47 (TN). Residues 47 to 71 (NTTKESKQDLLERLKKLEFDISEDE) are a coiled coil. K50 carries the post-translational modification N6-succinyllysine. Substrate is bound at residue K179. Residue D204 participates in Mg(2+) binding.

Belongs to the HAD-like hydrolase superfamily. The cofactor is Mg(2+).

This Bos taurus (Bovine) protein is Haloacid dehalogenase-like hydrolase domain-containing protein 2 (HDHD2).